Here is a 402-residue protein sequence, read N- to C-terminus: Phosphoglycerate kinase (402 aa).

Substrate-binding positions include 24 to 26 (DFN), Arg-41, 64 to 67 (HMGR), Arg-123, and Arg-156. Residues Lys-207, Gly-298, Glu-329, and 358 to 361 (GGDS) contribute to the ATP site.

Belongs to the phosphoglycerate kinase family. As to quaternary structure, monomer.

It is found in the cytoplasm. It carries out the reaction (2R)-3-phosphoglycerate + ATP = (2R)-3-phospho-glyceroyl phosphate + ADP. The protein operates within carbohydrate degradation; glycolysis; pyruvate from D-glyceraldehyde 3-phosphate: step 2/5. In Microcystis aeruginosa (strain NIES-843 / IAM M-2473), this protein is Phosphoglycerate kinase.